Reading from the N-terminus, the 89-residue chain is Acylphosphatase (89 aa).

The 87-residue stretch at 3-89 folds into the Acylphosphatase-like domain; the sequence is RMTAWVHGFV…RGDLTGFVER (87 aa). Catalysis depends on residues Arg-18 and Asn-36.

This sequence belongs to the acylphosphatase family.

The enzyme catalyses an acyl phosphate + H2O = a carboxylate + phosphate + H(+). The sequence is that of Acylphosphatase (acyP) from Rhodococcus jostii (strain RHA1).